Reading from the N-terminus, the 269-residue chain is GTP cyclohydrolase FolE2 (269 aa).

This sequence belongs to the GTP cyclohydrolase IV family.

The enzyme catalyses GTP + H2O = 7,8-dihydroneopterin 3'-triphosphate + formate + H(+). It participates in cofactor biosynthesis; 7,8-dihydroneopterin triphosphate biosynthesis; 7,8-dihydroneopterin triphosphate from GTP: step 1/1. Converts GTP to 7,8-dihydroneopterin triphosphate. In Burkholderia ambifaria (strain MC40-6), this protein is GTP cyclohydrolase FolE2.